Reading from the N-terminus, the 257-residue chain is Deoxyribose-phosphate aldolase (257 aa).

Asp-102 serves as the catalytic Proton donor/acceptor. The Schiff-base intermediate with acetaldehyde role is filled by Lys-166. The Proton donor/acceptor role is filled by Lys-198.

The protein belongs to the DeoC/FbaB aldolase family. DeoC type 2 subfamily.

The protein resides in the cytoplasm. The enzyme catalyses 2-deoxy-D-ribose 5-phosphate = D-glyceraldehyde 3-phosphate + acetaldehyde. The protein operates within carbohydrate degradation; 2-deoxy-D-ribose 1-phosphate degradation; D-glyceraldehyde 3-phosphate and acetaldehyde from 2-deoxy-alpha-D-ribose 1-phosphate: step 2/2. Catalyzes a reversible aldol reaction between acetaldehyde and D-glyceraldehyde 3-phosphate to generate 2-deoxy-D-ribose 5-phosphate. The chain is Deoxyribose-phosphate aldolase from Aeromonas hydrophila subsp. hydrophila (strain ATCC 7966 / DSM 30187 / BCRC 13018 / CCUG 14551 / JCM 1027 / KCTC 2358 / NCIMB 9240 / NCTC 8049).